A 111-amino-acid chain; its full sequence is Probable 4-amino-4-deoxy-L-arabinose-phosphoundecaprenol flippase subunit ArnE (111 aa).

A run of 3 helical transmembrane segments spans residues 38-58 (LWLG…LLVL), 61-81 (LPVG…TLAA), and 91-111 (PRHW…GSAA). Positions 40-109 (LGLALICMGA…IISGIIILGS (70 aa)) constitute an EamA domain.

This sequence belongs to the ArnE family. Heterodimer of ArnE and ArnF.

The protein localises to the cell inner membrane. It participates in bacterial outer membrane biogenesis; lipopolysaccharide biosynthesis. Functionally, translocates 4-amino-4-deoxy-L-arabinose-phosphoundecaprenol (alpha-L-Ara4N-phosphoundecaprenol) from the cytoplasmic to the periplasmic side of the inner membrane. In Salmonella agona (strain SL483), this protein is Probable 4-amino-4-deoxy-L-arabinose-phosphoundecaprenol flippase subunit ArnE.